Consider the following 468-residue polypeptide: Tapasin-related protein (468 aa).

A signal peptide spans 1-18 (MGTQEGWCLLLCLALSGA). Residues 19–405 (AETKPHPAER…STQVVPPERR (387 aa)) lie on the Lumenal side of the membrane. The Ig-like V-type domain occupies 181–297 (PQGTVRTAVE…SLYRAQQIIQ (117 aa)). 2 disulfides stabilise this stretch: cysteine 212–cysteine 283 and cysteine 321–cysteine 382. An N-linked (GlcNAc...) asparagine glycan is attached at asparagine 265. The Ig-like C1-type domain occupies 304–394 (PKVRLSLANE…MHISLEEPLG (91 aa)). Residues 406-426 (TALGVIFASSLFLLALLFLGL) traverse the membrane as a helical segment. Residues 427–468 (QRRQAPTRVGLLQAERWKTTSCADTQSSHLHEDRTACVSQPS) lie on the Cytoplasmic side of the membrane.

Interacts with peptide-free HLA-A*02-B2M complexes or those loaded with low affinity peptides, likely facilitating peptide exchange onto higher affinity peptides. Interacts with MR1 in a ligand-independent way; this interaction may stabilize MR1 pool and facilitate ligand loading and dissociation.

Its subcellular location is the cell membrane. The protein localises to the endoplasmic reticulum membrane. It is found in the microsome membrane. The protein resides in the golgi apparatus membrane. Functionally, component of the antigen processing and presentation pathway, which binds to MHC class I coupled with beta2-microglobulin/B2M. Association between TAPBPR and MHC class I occurs in the absence of a functional peptide-loading complex (PLC). Expression seems to slow down and down-regulate MHC class I surface expression. The chain is Tapasin-related protein (TAPBPL) from Pongo abelii (Sumatran orangutan).